Consider the following 234-residue polypeptide: 2-amino-5-formylamino-6-ribosylaminopyrimidin-4(3H)-one 5'-monophosphate deformylase (234 aa).

4 residues coordinate Fe cation: glutamate 30, histidine 32, aspartate 41, and histidine 111.

Belongs to the creatininase superfamily. FAPy deformylase family. In terms of assembly, homodimer. Requires Fe(2+) as cofactor. The cofactor is Zn(2+).

It carries out the reaction 2-amino-5-formylamino-6-(5-phospho-D-ribosylamino)pyrimidin-4(3H)-one + H2O = 2,5-diamino-6-(1-D-ribosylamino)pyrimidin-4(3H)-one 5'-phosphate + formate + H(+). It functions in the pathway cofactor biosynthesis; coenzyme F420 biosynthesis. Its pathway is cofactor biosynthesis; riboflavin biosynthesis. Its function is as follows. Catalyzes the hydrolysis of the formamide of 2-amino-5-formylamino-6-ribosylamino-4(3H)-pyrimidinone 5'-monophosphate (FAPy) to form 2,5-diamino-6-ribosylamino-4(3H)-pyrimidinone 5'-phosphate (APy). The sequence is that of 2-amino-5-formylamino-6-ribosylaminopyrimidin-4(3H)-one 5'-monophosphate deformylase from Methanothermobacter thermautotrophicus (strain ATCC 29096 / DSM 1053 / JCM 10044 / NBRC 100330 / Delta H) (Methanobacterium thermoautotrophicum).